Reading from the N-terminus, the 215-residue chain is Cytochrome b6 (215 aa).

The chain crosses the membrane as a helical span at residues 32-52 (IFYCLGGITLTCFLVQVATGF). C35 contacts heme c. The heme b site is built by H86 and H100. Transmembrane regions (helical) follow at residues 90-110 (ASMM…TGGF), 116-136 (LTWV…VTGY), and 186-206 (LHTF…FPMI). Heme b contacts are provided by H187 and H202.

This sequence belongs to the cytochrome b family. PetB subfamily. The 4 large subunits of the cytochrome b6-f complex are cytochrome b6, subunit IV (17 kDa polypeptide, PetD), cytochrome f and the Rieske protein, while the 4 small subunits are PetG, PetL, PetM and PetN. The complex functions as a dimer. The cofactor is heme b. It depends on heme c as a cofactor.

It is found in the plastid. The protein localises to the chloroplast thylakoid membrane. Component of the cytochrome b6-f complex, which mediates electron transfer between photosystem II (PSII) and photosystem I (PSI), cyclic electron flow around PSI, and state transitions. This chain is Cytochrome b6, found in Lactuca sativa (Garden lettuce).